The chain runs to 703 residues: Neoverrucotoxin subunit alpha (703 aa).

Residue Ser2 is modified to N-acetylserine. The region spanning 508-703 (PRMPFVQGYK…RFDHGTVRLL (196 aa)) is the B30.2/SPRY domain.

It belongs to the SNTX/VTX toxin family. In terms of assembly, heterodimer of alpha and beta subunits. In terms of processing, not glycosylated. Four intrachain disulfide linkages are present in the heterodimer. No interchain disulfide bound links the two subunits. Expressed by the venom gland.

The protein resides in the secreted. Functionally, has hemolytic and lethal activities. Its hemolytic activity is inhibited by anionic lipids, especially potently by cardiolipin. This chain is Neoverrucotoxin subunit alpha, found in Synanceia verrucosa (Reef stonefish).